The primary structure comprises 877 residues: GTPase activating protein homolog 2 (877 aa).

One can recognise an F-BAR domain in the interval 14 to 285; sequence FKFTDNLWDG…SVEMIDITND (272 aa). Positions 130–214 form a coiled coil; sequence QEGIKLKQDM…SNCDEEYREQ (85 aa). Residues 374–560 enclose the Rho-GAP domain; sequence VSLDELMNRQ…TLIKQIPPPL (187 aa). 3 disordered regions span residues 589–612, 644–704, and 749–800; these read DQLS…GSGS, LPPL…AEPT, and AATP…LAST. 3 stretches are compositionally biased toward low complexity: residues 593–612, 653–676, and 749–779; these read NDDN…GSGS, SGSG…SPTT, and AATP…STST. Residues 780–800 show a composition bias toward polar residues; sequence IKTSSPDRTTPLTSSPPLAST.

It localises to the cytoplasm. It is found in the contractile vacuole. Functionally, rho GTPase-activating protein involved in the signal transduction pathway. Regulator of the contractile vacuole network as well as involved in driving vacuole emptying. This is GTPase activating protein homolog 2 (mgp2) from Dictyostelium discoideum (Social amoeba).